The primary structure comprises 437 residues: Cobyrinate a,c-diamide synthase (437 aa).

Residues 241–430 (KIAVAKDEAF…AHVHFFGNLD (190 aa)) form the GATase cobBQ-type domain. Cys323 (nucleophile) is an active-site residue.

The protein belongs to the CobB/CbiA family. The cofactor is Mg(2+).

It catalyses the reaction cob(II)yrinate + 2 L-glutamine + 2 ATP + 2 H2O = cob(II)yrinate a,c diamide + 2 L-glutamate + 2 ADP + 2 phosphate + 2 H(+). It functions in the pathway cofactor biosynthesis; adenosylcobalamin biosynthesis; cob(II)yrinate a,c-diamide from sirohydrochlorin (anaerobic route): step 10/10. Catalyzes the ATP-dependent amidation of the two carboxylate groups at positions a and c of cobyrinate, using either L-glutamine or ammonia as the nitrogen source. This Clostridium acetobutylicum (strain ATCC 824 / DSM 792 / JCM 1419 / IAM 19013 / LMG 5710 / NBRC 13948 / NRRL B-527 / VKM B-1787 / 2291 / W) protein is Cobyrinate a,c-diamide synthase.